The sequence spans 319 residues: 2-dehydropantoate 2-reductase (319 aa).

NADP(+) is bound by residues 10-15 and Asn105; that span reads GTGALG. Asn105 lines the substrate pocket. Catalysis depends on Lys192, which acts as the Proton donor. The substrate site is built by Asn196, Asn200, and Ser262. Glu274 is a binding site for NADP(+).

Belongs to the ketopantoate reductase family.

The protein localises to the cytoplasm. It carries out the reaction (R)-pantoate + NADP(+) = 2-dehydropantoate + NADPH + H(+). Its pathway is cofactor biosynthesis; (R)-pantothenate biosynthesis; (R)-pantoate from 3-methyl-2-oxobutanoate: step 2/2. In terms of biological role, catalyzes the NADPH-dependent reduction of ketopantoate into pantoic acid. This chain is 2-dehydropantoate 2-reductase, found in Nostoc sp. (strain PCC 7120 / SAG 25.82 / UTEX 2576).